The chain runs to 311 residues: Urease accessory protein UreD 3 (311 aa).

It belongs to the UreD family. As to quaternary structure, ureD, UreF and UreG form a complex that acts as a GTP-hydrolysis-dependent molecular chaperone, activating the urease apoprotein by helping to assemble the nickel containing metallocenter of UreC. The UreE protein probably delivers the nickel.

It is found in the cytoplasm. Required for maturation of urease via the functional incorporation of the urease nickel metallocenter. The sequence is that of Urease accessory protein UreD 3 from Methylorubrum populi (strain ATCC BAA-705 / NCIMB 13946 / BJ001) (Methylobacterium populi).